A 105-amino-acid chain; its full sequence is UPF0145 protein GK1405 (105 aa).

The protein belongs to the UPF0145 family.

The polypeptide is UPF0145 protein GK1405 (Geobacillus kaustophilus (strain HTA426)).